The following is a 292-amino-acid chain: Protein LicB (292 aa).

EamA domains follow at residues 70–139 (ALSG…LLAI) and 160–286 (LGWS…VTLY).

In Haemophilus influenzae (strain ATCC 51907 / DSM 11121 / KW20 / Rd), this protein is Protein LicB (licB).